Reading from the N-terminus, the 254-residue chain is Cell wall biogenesis protein NCW2 (254 aa).

The first 17 residues, 1–17, serve as a signal peptide directing secretion; it reads MKACSILFTTLITLAAA. 3 disordered regions span residues 19–57, 111–143, and 167–191; these read KDSG…SAST, TSTA…DGPV, and ATTD…SSTK. The segment covering 27–42 has biased composition (low complexity); the sequence is QNSEDSSQKESSNSQE. Positions 43–57 are enriched in polar residues; the sequence is ITPTTTKEAQESAST. Positions 111–139 are enriched in low complexity; that stretch reads TSTASVQPTGETSSGITNSASSSTTSTST. N-linked (GlcNAc...) asparagine glycosylation occurs at N229. The GPI-anchor amidated asparagine moiety is linked to residue N232. Residues 233–254 constitute a propeptide, removed in mature form; that stretch reads GAFAGTHIAYGAGAFAVGALLL.

The protein localises to the cell membrane. Cell wall biogenesis protein that participates in the organization of the beta-glucan assembly. Involved in the mechanism responsible for cell tolerance to polyhexamethylene biguanide (PHMB), an antifungal agent. This is Cell wall biogenesis protein NCW2 from Saccharomyces cerevisiae (strain ATCC 204508 / S288c) (Baker's yeast).